Here is a 162-residue protein sequence, read N- to C-terminus: Ribosomal RNA large subunit methyltransferase H (162 aa).

Residues leucine 78, glycine 109, and 128-133 (LSPLTL) contribute to the S-adenosyl-L-methionine site.

This sequence belongs to the RNA methyltransferase RlmH family. As to quaternary structure, homodimer.

It localises to the cytoplasm. It catalyses the reaction pseudouridine(1915) in 23S rRNA + S-adenosyl-L-methionine = N(3)-methylpseudouridine(1915) in 23S rRNA + S-adenosyl-L-homocysteine + H(+). Specifically methylates the pseudouridine at position 1915 (m3Psi1915) in 23S rRNA. The chain is Ribosomal RNA large subunit methyltransferase H from Psychrobacter sp. (strain PRwf-1).